Consider the following 326-residue polypeptide: Virulence-associated V antigen (326 aa).

The protein resides in the secreted. Possibly involved in calcium regulation of YOP expression, which includes the export process. The chain is Virulence-associated V antigen (lcrV) from Yersinia pestis.